The chain runs to 142 residues: Cytochrome b5-related protein (142 aa).

The region spanning 16–100 (PTYRNSAPVT…IAKYKVRDAY (85 aa)) is the Cytochrome b5 heme-binding domain. The heme site is built by His59 and His82.

This sequence belongs to the cytochrome b5 family.

May play a role in muscle cell metabolism. The protein is Cytochrome b5-related protein (Cyt-b5-r) of Drosophila virilis (Fruit fly).